The following is a 591-amino-acid chain: Aspartate--tRNA(Asp/Asn) ligase (591 aa).

Glu174 is an L-aspartate binding site. Residues 198–201 form an aspartate region; the sequence is QLFK. An L-aspartate-binding site is contributed by Arg220. ATP is bound by residues 220-222 and Gln229; that span reads RDE. His450 is a binding site for L-aspartate. Residue Glu483 coordinates ATP. Arg490 serves as a coordination point for L-aspartate. Residue 535–538 coordinates ATP; that stretch reads GLDR.

The protein belongs to the class-II aminoacyl-tRNA synthetase family. Type 1 subfamily. Homodimer.

It is found in the cytoplasm. The enzyme catalyses tRNA(Asx) + L-aspartate + ATP = L-aspartyl-tRNA(Asx) + AMP + diphosphate. Aspartyl-tRNA synthetase with relaxed tRNA specificity since it is able to aspartylate not only its cognate tRNA(Asp) but also tRNA(Asn). Reaction proceeds in two steps: L-aspartate is first activated by ATP to form Asp-AMP and then transferred to the acceptor end of tRNA(Asp/Asn). The protein is Aspartate--tRNA(Asp/Asn) ligase of Azotobacter vinelandii (strain DJ / ATCC BAA-1303).